The primary structure comprises 340 residues: GTP 3',8-cyclase (340 aa).

Residues 8-229 (KLGRPIRDLR…IEQHFEISPV (222 aa)) enclose the Radical SAM core domain. Residue R17 participates in GTP binding. 2 residues coordinate [4Fe-4S] cluster: C24 and C28. Y30 is an S-adenosyl-L-methionine binding site. Residue C31 coordinates [4Fe-4S] cluster. R71 is a GTP binding site. G75 lines the S-adenosyl-L-methionine pocket. T102 provides a ligand contact to GTP. S126 provides a ligand contact to S-adenosyl-L-methionine. A GTP-binding site is contributed by K163. M197 is an S-adenosyl-L-methionine binding site. [4Fe-4S] cluster contacts are provided by C261 and C264. GTP is bound at residue 266–268 (RAR). A [4Fe-4S] cluster-binding site is contributed by C278.

Belongs to the radical SAM superfamily. MoaA family. As to quaternary structure, monomer and homodimer. [4Fe-4S] cluster serves as cofactor.

The enzyme catalyses GTP + AH2 + S-adenosyl-L-methionine = (8S)-3',8-cyclo-7,8-dihydroguanosine 5'-triphosphate + 5'-deoxyadenosine + L-methionine + A + H(+). Its pathway is cofactor biosynthesis; molybdopterin biosynthesis. Its function is as follows. Catalyzes the cyclization of GTP to (8S)-3',8-cyclo-7,8-dihydroguanosine 5'-triphosphate. The chain is GTP 3',8-cyclase from Staphylococcus epidermidis (strain ATCC 35984 / DSM 28319 / BCRC 17069 / CCUG 31568 / BM 3577 / RP62A).